Reading from the N-terminus, the 341-residue chain is MTERKRNLRPVRDVAPPTLQFRTVHGYRRAFRIAGSGPAILLIHGIGDNSTTWNGVHAKLAQRFTVIAPDLLGHGQSDKPRADYSVAAYANGMRDLLSVLDIERVTIVGHSLGGGVAMQFAYQFPQLVDRLILVSAGGVTKDVNIVFRLASLPMGSEAMALLRLPLVLPAVQIAGRIVGKAIGTTSLGHDLPNVLRILDDLPEPTASAAFGRTLRAVVDWRGQMVTMLDRCYLTEAIPVQIIWGTKDVVLPVRHAHMAHAAMPGSQLEIFEGSGHFPFHDDPARFIDIVERFMDTTEPAEYDQAALRALLRRGGGEATVTGSADTRVAVLNAIGSNERSAT.

Active-site residues include Ser111, Asp247, and His275.

The protein belongs to the DmpD/TodF/XylF esterase family.

This is an uncharacterized protein from Mycobacterium bovis (strain ATCC BAA-935 / AF2122/97).